A 282-amino-acid polypeptide reads, in one-letter code: Aquaporin PIP-type (282 aa).

Transmembrane regions (helical) follow at residues 39-61 and 74-96; these read WRAA…ATVI and GLLG…TAGI. The short motif at 102 to 104 is the NPA 1 element; the sequence is NPA. Transmembrane regions (helical) follow at residues 116–138, 159–181, 201–223, and 243–265; these read SLLR…VGLV, GYNK…YTVF, LPIG…TGIN, and HWIF…QYVL. The short motif at 223–225 is the NPA 2 element; it reads NPA.

It belongs to the MIP/aquaporin (TC 1.A.8) family. PIP (TC 1.A.8.11) subfamily.

The protein localises to the membrane. Water-specific channel. The chain is Aquaporin PIP-type from Atriplex canescens (Fourwing saltbush).